The sequence spans 365 residues: Prostaglandin E2 receptor EP3 subtype (365 aa).

A disordered region spans residues 1-22 (MASMWAPEHSAEAHSNLSSTTD). Residues 1-30 (MASMWAPEHSAEAHSNLSSTTDDCGSVSVA) lie on the Extracellular side of the membrane. Residues 13–22 (AHSNLSSTTD) show a composition bias toward polar residues. The N-linked (GlcNAc...) asparagine glycan is linked to N16. The chain crosses the membrane as a helical span at residues 31–55 (FPITMMVTGFVGNALAMLLVSRSYR). Topologically, residues 56-68 (RRESKRKKSFLLC) are cytoplasmic. A helical membrane pass occupies residues 69-89 (IGWLALTDLVGQLLTSPVVIL). At 90–108 (VYLSQRRWEQLDPSGRLCT) the chain is on the extracellular side. C107 and C184 form a disulfide bridge. The chain crosses the membrane as a helical span at residues 109–130 (FFGLTMTVFGLSSLLVASAMAV). Residues 131–151 (ERALAIRAPHWYASHMKTRAT) lie on the Cytoplasmic side of the membrane. The chain crosses the membrane as a helical span at residues 152–173 (PVLLGVWLSVLAFALLPVLGVG). Topologically, residues 174–203 (RYSVQWPGTWCFISTGPAGNETDPAREPGS) are extracellular. The N-linked (GlcNAc...) asparagine glycan is linked to N193. The helical transmembrane segment at 204–229 (VAFASAFACLGLLALVVTFACNLATI) threads the bilayer. Residues 230 to 259 (KALVSRCRAKAAVSQSSAQWGRITTETAIQ) are Cytoplasmic-facing. The helical transmembrane segment at 260–283 (LMGIMCVLSVCWSPLLIMMLKMIF) threads the bilayer. Residues 284 to 303 (NQMSVEQCKTQMGKEKECNS) lie on the Extracellular side of the membrane. The helical transmembrane segment at 304–325 (FLIAVRLASLNQILDPWVYLLL) threads the bilayer. The Cytoplasmic segment spans residues 326 to 365 (RKILLRKFCQIRDHTNYASSSTSLPCPGSSALMWSDQLER).

Belongs to the G-protein coupled receptor 1 family. As to quaternary structure, interacts (via C-terminus) with MKLN1. In terms of processing, ligand binding is affected by cAMP-dependent phosphorylation in brain membranes. As to expression, detected in platelets. Kidney, uterus, and mastocytoma cells, and in a lesser amount in brain, thymus, lung, heart, stomach and spleen.

Its subcellular location is the cell membrane. Functionally, receptor for prostaglandin E2 (PGE2). Required for normal development of fever in response to pyrinogens, including IL1B, prostaglandin E2 and bacterial lipopolysaccharide (LPS). Required for normal potentiation of platelet aggregation by prostaglandin E2, and thus plays a role in the regulation of blood coagulation. Required for increased HCO3(-) secretion in the duodenum in response to mucosal acidification, and thereby contributes to the protection of the mucosa against acid-induced ulceration. Not required for normal kidney function, normal urine volume and osmolality. Receptor for prostaglandin E2 (PGE2); ligand binding activates a signaling cascade via G(i) proteins that leads to inhibition of adenylate cyclase. Shows high agonist-independent constitutive inhibition of adenylate cyclase. In terms of biological role, receptor for prostaglandin E2 (PGE2); ligand binding activates a signaling cascade via G(i) proteins that leads to inhibition of adenylate cyclase. Requires much higher ligand concentrations than isoform Alpha for activation. Does not display agonist-independent constitutive inhibition of adenylate cyclase. Its function is as follows. Receptor for prostaglandin E2 (PGE2); ligand binding can activate several distinct signaling cascades, resulting in activation or inhibition of adenylate cyclase. The protein is Prostaglandin E2 receptor EP3 subtype (Ptger3) of Mus musculus (Mouse).